The following is a 169-amino-acid chain: Putative phosphoesterase SACOL1020 (169 aa).

The Proton donor role is filled by histidine 34. 2 consecutive short sequence motifs (HXTX) follow at residues 34 to 37 (HVTI) and 115 to 118 (HFTI). The Proton acceptor role is filled by histidine 115.

It belongs to the 2H phosphoesterase superfamily. YjcG family.

This is Putative phosphoesterase SACOL1020 from Staphylococcus aureus (strain COL).